Here is a 165-residue protein sequence, read N- to C-terminus: Protein phosphatase 1 regulatory subunit 14C (165 aa).

Positions 1–12 (MSVATGSSETAG) are enriched in low complexity. The tract at residues 1 to 73 (MSVATGSSET…QRRHQQGKVT (73 aa)) is disordered. Position 2 is an N-acetylserine (serine 2). Residue serine 25 is modified to Phosphoserine. At arginine 27 the chain carries Omega-N-methylarginine. Serine 33 carries the phosphoserine modification. Residues 35-63 (GSSSGSGSSREDSAPVATAAAAGQVQQQQ) show a composition bias toward low complexity. Threonine 73 is subject to Phosphothreonine; by ILK1.

This sequence belongs to the PP1 inhibitor family. Post-translationally, has over 600-fold higher inhibitory activity when phosphorylated, creating a molecular switch for regulating the phosphorylation status of PPP1CA substrates and smooth muscle contraction. The main inhibitory site appears to be Thr-73. Detected in breast cancer.

Its subcellular location is the cytoplasm. It is found in the membrane. Functionally, inhibitor of the PP1 regulatory subunit PPP1CA. The chain is Protein phosphatase 1 regulatory subunit 14C (PPP1R14C) from Homo sapiens (Human).